A 499-amino-acid chain; its full sequence is Alpha-L-arabinofuranosidase B (499 aa).

A signal peptide spans 1–18 (MFSRRNLVALGLAATVSA). Asparagine 83 and asparagine 202 each carry an N-linked (GlcNAc...) asparagine glycan.

The protein belongs to the glycosyl hydrolase 54 family.

It carries out the reaction Hydrolysis of terminal non-reducing alpha-L-arabinofuranoside residues in alpha-L-arabinosides.. It participates in glycan metabolism; L-arabinan degradation. Able to hydrolyze 1,5-, 1,3- and 1,2-alpha-linkages not only in L-arabinofuranosyl oligosaccharides, but also in polysac-charides containing terminal non-reducing L-arabinofuranoses in side chains, like L-arabinan, arabinogalactan and arabinoxylan. The sequence is that of Alpha-L-arabinofuranosidase B (abfB) from Aspergillus niger.